The primary structure comprises 347 residues: NADH-ubiquinone oxidoreductase chain 2 (347 aa).

Transmembrane regions (helical) follow at residues 13–33 (IFAG…WVGL), 56–76 (AIKY…AILF), 96–116 (LMIM…FWVP), 123–143 (PLTS…SIMY), 149–169 (LNVS…SWGG), 178–198 (ILAY…PYNP), 201–221 (TILN…LLNL), 247–267 (TLLS…WAII), 274–294 (NSLI…YFYL), and 326–346 (LPTL…MLMI).

The protein belongs to the complex I subunit 2 family. In terms of assembly, core subunit of respiratory chain NADH dehydrogenase (Complex I) which is composed of 45 different subunits. Interacts with TMEM242.

The protein localises to the mitochondrion inner membrane. The enzyme catalyses a ubiquinone + NADH + 5 H(+)(in) = a ubiquinol + NAD(+) + 4 H(+)(out). In terms of biological role, core subunit of the mitochondrial membrane respiratory chain NADH dehydrogenase (Complex I) which catalyzes electron transfer from NADH through the respiratory chain, using ubiquinone as an electron acceptor. Essential for the catalytic activity and assembly of complex I. The sequence is that of NADH-ubiquinone oxidoreductase chain 2 from Homo sapiens (Human).